We begin with the raw amino-acid sequence, 569 residues long: Dihydroxy-acid dehydratase (569 aa).

Cys-61 is a binding site for [2Fe-2S] cluster. Asp-93 provides a ligand contact to Mg(2+). Cys-134 serves as a coordination point for [2Fe-2S] cluster. Asp-135 and Lys-136 together coordinate Mg(2+). N6-carboxylysine is present on Lys-136. Cys-211 contributes to the [2Fe-2S] cluster binding site. Position 462 (Glu-462) interacts with Mg(2+). The active-site Proton acceptor is Ser-488.

This sequence belongs to the IlvD/Edd family. Homodimer. The cofactor is [2Fe-2S] cluster. Requires Mg(2+) as cofactor.

It catalyses the reaction (2R)-2,3-dihydroxy-3-methylbutanoate = 3-methyl-2-oxobutanoate + H2O. It carries out the reaction (2R,3R)-2,3-dihydroxy-3-methylpentanoate = (S)-3-methyl-2-oxopentanoate + H2O. Its pathway is amino-acid biosynthesis; L-isoleucine biosynthesis; L-isoleucine from 2-oxobutanoate: step 3/4. The protein operates within amino-acid biosynthesis; L-valine biosynthesis; L-valine from pyruvate: step 3/4. Functionally, functions in the biosynthesis of branched-chain amino acids. Catalyzes the dehydration of (2R,3R)-2,3-dihydroxy-3-methylpentanoate (2,3-dihydroxy-3-methylvalerate) into 2-oxo-3-methylpentanoate (2-oxo-3-methylvalerate) and of (2R)-2,3-dihydroxy-3-methylbutanoate (2,3-dihydroxyisovalerate) into 2-oxo-3-methylbutanoate (2-oxoisovalerate), the penultimate precursor to L-isoleucine and L-valine, respectively. The polypeptide is Dihydroxy-acid dehydratase (Tropheryma whipplei (strain Twist) (Whipple's bacillus)).